We begin with the raw amino-acid sequence, 109 residues long: FAD assembly factor SdhE (109 aa).

The tract at residues 1-22 (MQDNFTASSPSSSSSASGVAED) is disordered. The segment covering 7-17 (ASSPSSSSSAS) has biased composition (low complexity).

This sequence belongs to the SdhE FAD assembly factor family.

The protein localises to the cytoplasm. In terms of biological role, an FAD assembly protein, which accelerates covalent attachment of the cofactor into other proteins. Plays an essential role in the assembly of succinate dehydrogenase (SDH, respiratory complex II), an enzyme complex that is a component of both the tricarboxylic acid cycle and the electron transport chain, and which couples the oxidation of succinate to fumarate with the reduction of ubiquinone (coenzyme Q) to ubiquinol. Required for flavinylation of SdhA, when the SDH operon and this gene are overexpressed in G.oxydans. Flavinylation of SdhA is detected only in the presence of sdhE. The polypeptide is FAD assembly factor SdhE (Acetobacter pasteurianus (strain NBRC 105184 / IFO 3283-01)).